Here is a 208-residue protein sequence, read N- to C-terminus: Uracil phosphoribosyltransferase (208 aa).

Residues Arg78, Arg103, and 130-138 contribute to the 5-phospho-alpha-D-ribose 1-diphosphate site; that span reads DPMLATGGS. Uracil is bound by residues Ile193 and 198–200; that span reads GDA. Asp199 lines the 5-phospho-alpha-D-ribose 1-diphosphate pocket.

This sequence belongs to the UPRTase family. Mg(2+) serves as cofactor.

It carries out the reaction UMP + diphosphate = 5-phospho-alpha-D-ribose 1-diphosphate + uracil. The protein operates within pyrimidine metabolism; UMP biosynthesis via salvage pathway; UMP from uracil: step 1/1. With respect to regulation, allosterically activated by GTP. Functionally, catalyzes the conversion of uracil and 5-phospho-alpha-D-ribose 1-diphosphate (PRPP) to UMP and diphosphate. The polypeptide is Uracil phosphoribosyltransferase (Shewanella baltica (strain OS223)).